The chain runs to 409 residues: uncharacterized protein (409 aa).

The signal sequence occupies residues 1–39 (MVSDSKLELPLPVNQQKPRRRRILKVHLLIAALILSAVG). Residues His-67, Asp-69, Glu-181, His-250, and His-271 each coordinate Zn(2+).

This sequence belongs to the metallo-dependent hydrolases superfamily. Peptidase M19 family. Interacts with dil1. Requires Zn(2+) as cofactor.

The enzyme catalyses an L-aminoacyl-L-amino acid + H2O = 2 an L-alpha-amino acid. This is an uncharacterized protein from Schizosaccharomyces pombe (strain 972 / ATCC 24843) (Fission yeast).